Here is a 473-residue protein sequence, read N- to C-terminus: Keratin, type I cytoskeletal 16 (473 aa).

The segment at 1–116 (MTTCSRQFTS…AGGDGLLVGS (116 aa)) is head. Residues 117–152 (EKVTMQNLNDRLASYLDKVRALEEANADLEVKIRDW) are coil 1A. One can recognise an IF rod domain in the interval 117–428 (EKVTMQNLND…RLLEGEDAHL (312 aa)). Positions 153–170 (YQRQRPSEIKDYSPYFKT) are linker 1. The tract at residues 171–262 (IEDLRNKIIA…KNHEEEMLAL (92 aa)) is coil 1B. The segment at 263–285 (RGQTGGDVNVEMDAAPGVDLSRI) is linker 12. The interval 286-424 (LNEMRDQYEQ…ATYRRLLEGE (139 aa)) is coil 2. Residues 425 to 473 (DAHLSSQQASGQSYSSREVFTSSSSSSSRQTRPILKEQSSSSFSQGQSS) form a tail region. Positions 428-473 (LSSQQASGQSYSSREVFTSSSSSSSRQTRPILKEQSSSSFSQGQSS) are disordered. 2 stretches are compositionally biased toward low complexity: residues 429–452 (SSQQ…SSSS) and 462–473 (QSSSSFSQGQSS).

It belongs to the intermediate filament family. Heterodimer of a type I and a type II keratin. KRT16 associates with KRT6 isomers (KRT6A or KRT6B). Interacts with TCHP. Interacts with TRADD. As to expression, expressed in the corneal epithelium (at protein level).

Its function is as follows. Epidermis-specific type I keratin that plays a key role in skin. Acts as a regulator of innate immunity in response to skin barrier breach: required for some inflammatory checkpoint for the skin barrier maintenance. This Homo sapiens (Human) protein is Keratin, type I cytoskeletal 16 (KRT16).